The sequence spans 106 residues: Urease subunit beta (106 aa).

Belongs to the urease beta subunit family. As to quaternary structure, heterotrimer of UreA (gamma), UreB (beta) and UreC (alpha) subunits. Three heterotrimers associate to form the active enzyme.

It localises to the cytoplasm. The catalysed reaction is urea + 2 H2O + H(+) = hydrogencarbonate + 2 NH4(+). Its pathway is nitrogen metabolism; urea degradation; CO(2) and NH(3) from urea (urease route): step 1/1. This Synechococcus sp. (strain CC9605) protein is Urease subunit beta.